We begin with the raw amino-acid sequence, 170 residues long: Calcineurin subunit B type 1 (170 aa).

Glycine 2 carries N-myristoyl glycine lipidation. EF-hand domains follow at residues 18 to 46, 50 to 85, 87 to 122, and 128 to 163; these read DEIK…FMSL, QQNP…FSVK, DKEQ…MVGN, and QLQQ…LDIH. Residues aspartate 31, aspartate 33, serine 35, serine 37, glutamate 42, aspartate 63, aspartate 65, asparagine 67, glutamate 69, glutamate 74, aspartate 100, aspartate 102, aspartate 104, tyrosine 106, and glutamate 111 each coordinate Ca(2+). Tyrosine 106 carries the post-translational modification Phosphotyrosine. Residues 131-136 are calcineurin A binding; it reads QIVDKT. Residues aspartate 141, aspartate 143, aspartate 145, arginine 147, and glutamate 152 each coordinate Ca(2+).

Belongs to the calcineurin regulatory subunit family. In terms of assembly, forms a complex composed of a calmodulin-dependent catalytic subunit (also known as calcineurin A) and a regulatory Ca(2+)-binding subunit (also known as calcineurin B). There are three catalytic subunits, each encoded by a separate gene (PPP3CA, PPP3CB, and PPP3CC) and two regulatory subunits which are also encoded by separate genes (PPP3R1 and PPP3R2). The interaction between the 2 subunits is Ca(2+)-independent. Interacts with catalytic subunit PPP3CA/calcineurin A. Interacts with catalytic subunit PPP3CB/calcineurin A. Interacts with CIB1 (via C-terminal region); the interaction increases upon cardiomyocyte hypertrophy. Interacts with RCAN1. Interacts with SPATA33 (via PQIIIT motif).

The protein resides in the cytoplasm. It localises to the cytosol. It is found in the cell membrane. The protein localises to the sarcolemma. Functionally, regulatory subunit of calcineurin, a calcium-dependent, calmodulin stimulated protein phosphatase. Confers calcium sensitivity. The polypeptide is Calcineurin subunit B type 1 (PPP3R1) (Bos taurus (Bovine)).